The following is a 424-amino-acid chain: Tyrosine--tRNA ligase (424 aa).

Tyrosine 37 is an L-tyrosine binding site. Residues 42–51 (PTADSLHLGH) carry the 'HIGH' region motif. The L-tyrosine site is built by tyrosine 174 and glutamine 178. Positions 234–238 (KFGKT) match the 'KMSKS' region motif. ATP is bound at residue lysine 237. Residues 357-414 (TGLIDALVASGLAKSKSEARTFIQSGSVAINGNKAEALDHAIGGDELLYGRFTILRRG) enclose the S4 RNA-binding domain.

The protein belongs to the class-I aminoacyl-tRNA synthetase family. TyrS type 1 subfamily. In terms of assembly, homodimer.

It localises to the cytoplasm. It carries out the reaction tRNA(Tyr) + L-tyrosine + ATP = L-tyrosyl-tRNA(Tyr) + AMP + diphosphate + H(+). In terms of biological role, catalyzes the attachment of tyrosine to tRNA(Tyr) in a two-step reaction: tyrosine is first activated by ATP to form Tyr-AMP and then transferred to the acceptor end of tRNA(Tyr). The sequence is that of Tyrosine--tRNA ligase from Dechloromonas aromatica (strain RCB).